A 691-amino-acid chain; its full sequence is Ribonucleoprotein PTB-binding 2 (691 aa).

Positions 1–30 (MAAAAGDGGGEGGAGLGSAAGLGPGPGLRG) are enriched in gly residues. The segment at 1 to 47 (MAAAAGDGGGEGGAGLGSAAGLGPGPGLRGQGPSAEAHEGAPDPMPA) is disordered. The residue at position 2 (Ala-2) is an N-acetylalanine. 3 consecutive RRM domains span residues 69–140 (RKIL…LQPT), 142–220 (ALLC…WMDV), and 231–309 (KCLC…FCAP). Disordered stretches follow at residues 492-522 (PNQH…EGNF) and 543-574 (GHHK…GEPP). The span at 548-569 (QQSQPKGTEISSGAASKNQTSL) shows a compositional bias: polar residues.

Interacts with PTBP1 and RAVER1.

It is found in the nucleus. The protein resides in the cytoplasm. May bind single-stranded nucleic acids. This Homo sapiens (Human) protein is Ribonucleoprotein PTB-binding 2 (RAVER2).